A 108-amino-acid polypeptide reads, in one-letter code: Pumilarin (108 aa).

A propeptide spanning residues 1–38 is cleaved from the precursor; sequence MTETKNEIKLHVLFGALAVGFLMLALFSFSLQMLPVAD. Positions 39 to 108 form a cross-link, cyclopeptide (Leu-Trp); that stretch reads LAKEFGIPGS…KKGRKAVIAW (70 aa).

The cross-link permits a high resistance to proteolysis. Is more resistant to specific proteases than to unspecific proteases.

The protein resides in the secreted. In terms of biological role, cyclopeptide antibiotic that inhibits both Gram-positive and Gram-negative bacteria. Shows potent to weak activities against M.flavus (MIC=3 ug/ml), B.cereus (MIC=12 ug/ml), B.pumilus (MIC=12 ug/ml), E.coli (MIC=12 ug/ml), and S.pneumoniae (MIC=47 ug/ml). May act by forming pores. In Bacillus safensis, this protein is Pumilarin.